Consider the following 169-residue polypeptide: Der GTPase-activating protein YihI (169 aa).

2 disordered regions span residues 1-100 and 144-169; these read MKPS…AELE and GLSY…LRGN. Basic residues predominate over residues 10–19; that stretch reads SKGHAKARRK. Residues 20-30 show a composition bias toward basic and acidic residues; that stretch reads TREELDQEARD. A compositionally biased stretch (basic residues) spans 31–40; the sequence is RKRQKKRRGH. A compositionally biased stretch (polar residues) spans 49–58; it reads GNTSSGSKGQ. Residues 147–159 are compositionally biased toward acidic residues; it reads YDDDEEEEEDEKQ. Positions 160–169 are enriched in basic and acidic residues; that stretch reads EDMMRLLRGN.

Belongs to the YihI family. In terms of assembly, interacts with Der.

Its function is as follows. A GTPase-activating protein (GAP) that modifies Der/EngA GTPase function. May play a role in ribosome biogenesis. In Escherichia coli (strain SMS-3-5 / SECEC), this protein is Der GTPase-activating protein YihI.